A 378-amino-acid polypeptide reads, in one-letter code: Cobalt-precorrin-5B C(1)-methyltransferase (378 aa).

Belongs to the CbiD family.

It carries out the reaction Co-precorrin-5B + S-adenosyl-L-methionine = Co-precorrin-6A + S-adenosyl-L-homocysteine. It participates in cofactor biosynthesis; adenosylcobalamin biosynthesis; cob(II)yrinate a,c-diamide from sirohydrochlorin (anaerobic route): step 6/10. Its function is as follows. Catalyzes the methylation of C-1 in cobalt-precorrin-5B to form cobalt-precorrin-6A. The chain is Cobalt-precorrin-5B C(1)-methyltransferase from Methanococcus aeolicus (strain ATCC BAA-1280 / DSM 17508 / OCM 812 / Nankai-3).